A 393-amino-acid chain; its full sequence is Matrix metalloproteinase-23 (393 aa).

At 1–20 (MGRGACVPSAASGAGDRARQ) the chain is on the cytoplasmic side. A propeptide spanning residues 1-81 (MGRGACVPSA…PHPPVPRRRR (81 aa)) is cleaved from the precursor. A helical; Signal-anchor for type II membrane protein transmembrane segment spans residues 21–41 (LGAVLGALCLFPALVLLAWPG). The Lumenal portion of the chain corresponds to 42–393 (TPANGAGARV…TYSWRIRVRS (352 aa)). A disordered region spans residues 60 to 79 (TSGVLASGSLGPPHPPVPRR). N-linked (GlcNAc...) asparagine glycans are attached at residues Asn95 and Asn151. His214 is a binding site for Zn(2+). The active site involves Glu215. The Zn(2+) site is built by His218 and His224. Residue Asn235 is glycosylated (N-linked (GlcNAc...) asparagine). The 35-residue stretch at 258-292 (CLDRLFVCASWARRGFCDTRRRLMKRLCPSSCDFC) folds into the ShKT domain. 3 cysteine pairs are disulfide-bonded: Cys258-Cys292, Cys265-Cys285, and Cys274-Cys289. Residues 298-383 (PTVAATPPPP…VVRRRQRVLS (86 aa)) enclose the Ig-like C2-type domain. An N-linked (GlcNAc...) asparagine glycan is attached at Asn319. The cysteines at positions 324 and 373 are disulfide-linked.

It belongs to the peptidase M10A family. The cofactor is Zn(2+). In terms of processing, N-glycosylated. Post-translationally, proteolytic cleavage might yield an active form.

The protein localises to the membrane. Its subcellular location is the endoplasmic reticulum membrane. In terms of biological role, protease. May regulate the surface expression of some potassium channels by retaining them in the endoplasmic reticulum. This is Matrix metalloproteinase-23 (MMP23) from Bos taurus (Bovine).